The primary structure comprises 248 residues: Large ribosomal subunit protein uL4 (248 aa).

Residues 69-92 (HVPRLKNGSRAAKVPQAKGGREAH) are disordered.

The protein belongs to the universal ribosomal protein uL4 family. As to quaternary structure, part of the 50S ribosomal subunit.

Its function is as follows. One of the primary rRNA binding proteins, this protein initially binds near the 5'-end of the 23S rRNA. It is important during the early stages of 50S assembly. It makes multiple contacts with different domains of the 23S rRNA in the assembled 50S subunit and ribosome. Forms part of the polypeptide exit tunnel. In Methanoregula boonei (strain DSM 21154 / JCM 14090 / 6A8), this protein is Large ribosomal subunit protein uL4.